A 343-amino-acid polypeptide reads, in one-letter code: Ribonucleoside-diphosphate reductase small subunit (343 aa).

Fe cation is bound by residues Asp101, Glu131, and His134. The active site involves Tyr138. The chain crosses the membrane as a helical span at residues Ile188 to Leu208. Fe cation is bound by residues Glu194, Glu228, and His231.

Belongs to the ribonucleoside diphosphate reductase small chain family. As to quaternary structure, heterotetramer composed of a homodimer of the large subunit (R1) and a homodimer of the small subunit (R2). Larger multisubunit protein complex are also active, composed of (R1)n(R2)n. Fe cation serves as cofactor.

The protein resides in the host membrane. It carries out the reaction a 2'-deoxyribonucleoside 5'-diphosphate + [thioredoxin]-disulfide + H2O = a ribonucleoside 5'-diphosphate + [thioredoxin]-dithiol. Functionally, ribonucleoside-diphosphate reductase holoenzyme provides the precursors necessary for viral DNA synthesis. Allows virus growth in non-dividing cells, as well as reactivation from latency in infected hosts. Catalyzes the biosynthesis of deoxyribonucleotides from the corresponding ribonucleotides. This chain is Ribonucleoside-diphosphate reductase small subunit, found in Gallid herpesvirus 2 (strain Chicken/Md5/ATCC VR-987) (GaHV-2).